The chain runs to 520 residues: Cytochrome P450 72A68 (520 aa).

Residues 11–31 traverse the membrane as a helical segment; that stretch reads IILITVTFGLVYAWRVLNWMW. A heme-binding site is contributed by Cys466.

It belongs to the cytochrome P450 family. Heme serves as cofactor.

It is found in the membrane. It carries out the reaction oleanolate + 3 reduced [NADPH--hemoprotein reductase] + 3 O2 = gypsogenate + 3 oxidized [NADPH--hemoprotein reductase] + 4 H2O + 4 H(+). Catalyzes the carboxylation of oleanolic acid at the C-23 position to form gypsogenic acid. Involved in the hemolytic saponin biosynthetic pathway. This Medicago truncatula (Barrel medic) protein is Cytochrome P450 72A68.